The following is a 162-amino-acid chain: Ribosome maturation factor RimP (162 aa).

The protein belongs to the RimP family.

The protein resides in the cytoplasm. Required for maturation of 30S ribosomal subunits. This chain is Ribosome maturation factor RimP, found in Cupriavidus pinatubonensis (strain JMP 134 / LMG 1197) (Cupriavidus necator (strain JMP 134)).